Here is a 167-residue protein sequence, read N- to C-terminus: Dual specificity protein phosphatase 1B (167 aa).

In terms of domain architecture, Tyrosine-protein phosphatase spans 24–165; it reads DLSEIQQGLF…LQQFEKSIQG (142 aa). Cys109 acts as the Phosphocysteine intermediate in catalysis.

This sequence belongs to the protein-tyrosine phosphatase family. Non-receptor class dual specificity subfamily. As to quaternary structure, associates with MPK3 and MPK6. Interacts with MPK6 is promoted during HR-like responses triggered by fungal elicitors, whereas interaction with MPK3 in repressed. As to expression, expressed in flowers, seedlings, roots, leaves, and seeds. Present in stomata and meristematic cells.

The protein resides in the nucleus. The protein localises to the cytoplasm. The catalysed reaction is O-phospho-L-tyrosyl-[protein] + H2O = L-tyrosyl-[protein] + phosphate. It catalyses the reaction O-phospho-L-seryl-[protein] + H2O = L-seryl-[protein] + phosphate. The enzyme catalyses O-phospho-L-threonyl-[protein] + H2O = L-threonyl-[protein] + phosphate. Functionally, has a dual specificity toward Ser/Thr and Tyr-containing proteins. Prevents biotic and abiotic stress responses, including ozone, oxidative stress and pathogen attacks; represses MAPK activities during hypersensitive response to limit the spread of the HR response after infection by necrotrophic pathogen such as Botrytis cinerea. May be also involved in ABA and salt responses. Dephosphorylates MPK3 and MPK6. The polypeptide is Dual specificity protein phosphatase 1B (DSPTP1B) (Arabidopsis thaliana (Mouse-ear cress)).